We begin with the raw amino-acid sequence, 124 residues long: Large ribosomal subunit protein bL12 (124 aa).

It belongs to the bacterial ribosomal protein bL12 family. In terms of assembly, homodimer. Part of the ribosomal stalk of the 50S ribosomal subunit. Forms a multimeric L10(L12)X complex, where L10 forms an elongated spine to which 2 to 4 L12 dimers bind in a sequential fashion. Binds GTP-bound translation factors.

In terms of biological role, forms part of the ribosomal stalk which helps the ribosome interact with GTP-bound translation factors. Is thus essential for accurate translation. The protein is Large ribosomal subunit protein bL12 of Leptothrix cholodnii (strain ATCC 51168 / LMG 8142 / SP-6) (Leptothrix discophora (strain SP-6)).